The primary structure comprises 175 residues: Inner membrane protein p54 (175 aa).

The helical transmembrane segment at 32 to 52 (CTILVAIVVLIIIIIVLIYLF) threads the bilayer. The span at 79–89 (QWAGATPQPGT) shows a compositional bias: polar residues. Residues 79-121 (QWAGATPQPGTSKPAGATTGNVGKPITDRPATDRPVTNNPVTD) form a disordered region. Residues 141 to 153 (YTTATTQNTASQT) form an interaction with host DYNLL1 region.

This sequence belongs to the asfivirus envelope protein p54 family. Interacts with the host light chain cytoplasmic dynein DYNLL1; this interaction is critical for intracellular microtubule-dependent virus transport toward viral factories.

The protein localises to the virion membrane. It localises to the host cytoplasm. It is found in the host cytoskeleton. Its subcellular location is the host endoplasmic reticulum membrane. Functionally, inner envelope protein involved, through its interaction with host dynein, in the intracellular microtubule-dependent transport of viral capsid toward viral factories. Seems to induce caspase-3 activation and apoptosis. Plays a role in virion morphogenesis by recruiting and transforming the host ER membranes into the precursors of the viral envelope. Involved in virus attachment to the host cell. This is Inner membrane protein p54 from African swine fever virus (isolate Pig/Kenya/KEN-50/1950) (ASFV).